We begin with the raw amino-acid sequence, 497 residues long: Ethanolamine-phosphate phospho-lyase (497 aa).

Residue Lys278 is modified to N6-(pyridoxal phosphate)lysine. Positions 440 to 497 are disordered; the sequence is TGAETESGISKNTPCRTKMPKEAQSELLRDSSLESRENPSQKRNGLCTDSLLSKRLRT. Residues 458–479 are compositionally biased toward basic and acidic residues; the sequence is MPKEAQSELLRDSSLESRENPS.

Belongs to the class-III pyridoxal-phosphate-dependent aminotransferase family. Homotetramer. The cofactor is pyridoxal 5'-phosphate.

The protein resides in the mitochondrion. It carries out the reaction phosphoethanolamine + H2O = acetaldehyde + NH4(+) + phosphate. Its function is as follows. Catalyzes the pyridoxal-phosphate-dependent breakdown of phosphoethanolamine, converting it to ammonia, inorganic phosphate and acetaldehyde. In Bos taurus (Bovine), this protein is Ethanolamine-phosphate phospho-lyase (ETNPPL).